Here is a 160-residue protein sequence, read N- to C-terminus: ATP synthase subunit b, chloroplastic (160 aa).

A helical membrane pass occupies residues Asn12–Val31.

Belongs to the ATPase B chain family. F-type ATPases have 2 components, F(1) - the catalytic core - and F(0) - the membrane proton channel. F(1) has five subunits: alpha(3), beta(3), gamma(1), delta(1), epsilon(1). F(0) has four main subunits: a(1), b(1), b'(1) and c(10-14). The alpha and beta chains form an alternating ring which encloses part of the gamma chain. F(1) is attached to F(0) by a central stalk formed by the gamma and epsilon chains, while a peripheral stalk is formed by the delta, b and b' chains.

It localises to the plastid. Its subcellular location is the chloroplast thylakoid membrane. Its function is as follows. F(1)F(0) ATP synthase produces ATP from ADP in the presence of a proton or sodium gradient. F-type ATPases consist of two structural domains, F(1) containing the extramembraneous catalytic core and F(0) containing the membrane proton channel, linked together by a central stalk and a peripheral stalk. During catalysis, ATP synthesis in the catalytic domain of F(1) is coupled via a rotary mechanism of the central stalk subunits to proton translocation. Functionally, component of the F(0) channel, it forms part of the peripheral stalk, linking F(1) to F(0). This Cyanidioschyzon merolae (strain NIES-3377 / 10D) (Unicellular red alga) protein is ATP synthase subunit b, chloroplastic.